The sequence spans 399 residues: Zinc finger HIT domain-containing protein 2 (399 aa).

M1 carries the N-acetylmethionine modification. Zn(2+) contacts are provided by C7, C10, C22, C25, C30, C34, H38, and C41. The segment at 7-41 (CGFCPTGEAQPARYTCPRCNVPYCSLRCYRAHGSC) adopts an HIT-type zinc-finger fold. Disordered stretches follow at residues 71 to 97 (LRQQ…GLSG) and 141 to 166 (EELG…PEPV).

Interacts (via HIT-type zinc finger) with RUVBL2 in the presence of ATP or ADP; shows a stronger interaction in the presence of ADP.

Its function is as follows. May act as a bridging factor mediating the interaction between the R2TP/Prefoldin-like (R2TP/PFDL) complex and U5 small nuclear ribonucleoprotein (U5 snRNP). Required for the interaction of R2TP complex subunit RPAP3 and prefoldin-like subunit URI1 with U5 snRNP proteins EFTUD2 and PRPF8. May play a role in regulating the composition of the U5 snRNP complex. This chain is Zinc finger HIT domain-containing protein 2 (ZNHIT2), found in Bos taurus (Bovine).